The chain runs to 187 residues: ATP synthase subunit delta, chloroplastic (187 aa).

Belongs to the ATPase delta chain family. In terms of assembly, F-type ATPases have 2 components, F(1) - the catalytic core - and F(0) - the membrane proton channel. F(1) has five subunits: alpha(3), beta(3), gamma(1), delta(1), epsilon(1). CF(0) has four main subunits: a(1), b(1), b'(1) and c(10-14). The alpha and beta chains form an alternating ring which encloses part of the gamma chain. F(1) is attached to F(0) by a central stalk formed by the gamma and epsilon chains, while a peripheral stalk is formed by the delta, b and b' chains.

It localises to the plastid. The protein localises to the chloroplast thylakoid membrane. F(1)F(0) ATP synthase produces ATP from ADP in the presence of a proton or sodium gradient. F-type ATPases consist of two structural domains, F(1) containing the extramembraneous catalytic core and F(0) containing the membrane proton channel, linked together by a central stalk and a peripheral stalk. During catalysis, ATP synthesis in the catalytic domain of F(1) is coupled via a rotary mechanism of the central stalk subunits to proton translocation. Functionally, this protein is part of the stalk that links CF(0) to CF(1). It either transmits conformational changes from CF(0) to CF(1) or is implicated in proton conduction. The protein is ATP synthase subunit delta, chloroplastic of Thalassiosira pseudonana (Marine diatom).